The chain runs to 179 residues: 3-hydroxyanthranilate 3,4-dioxygenase 2 (179 aa).

Residue R44 coordinates O2. The Fe cation site is built by H48, E60, and H99. E60 serves as a coordination point for substrate. Residues R103 and E113 each contribute to the substrate site.

It belongs to the 3-HAO family. Requires Fe(2+) as cofactor.

The protein localises to the cytoplasm. The catalysed reaction is 3-hydroxyanthranilate + O2 = (2Z,4Z)-2-amino-3-carboxymuconate 6-semialdehyde. It functions in the pathway cofactor biosynthesis; NAD(+) biosynthesis; quinolinate from L-kynurenine: step 3/3. Functionally, catalyzes the oxidative ring opening of 3-hydroxyanthranilate to 2-amino-3-carboxymuconate semialdehyde, which spontaneously cyclizes to quinolinate. The polypeptide is 3-hydroxyanthranilate 3,4-dioxygenase 2 (bna1-2) (Aspergillus oryzae (strain ATCC 42149 / RIB 40) (Yellow koji mold)).